Reading from the N-terminus, the 1136-residue chain is Type I inositol polyphosphate 5-phosphatase 13 (1136 aa).

WD repeat units lie at residues 147-185 (ETQT…EAGC), 205-244 (VTTS…VSHD), 259-297 (AHRG…KSLL), 436-475 (EDTR…RDVN), and 515-552 (SHNE…PLDN). Catalytic stretches follow at residues 782-798 (DMVA…FGIT) and 861-876 (KKRI…YRDT). Lys-940 is covalently cross-linked (Glycyl lysine isopeptide (Lys-Gly) (interchain with G-Cter in ubiquitin)). The tract at residues 1104 to 1136 (KNLGGSRRYPTDITRNGSTRPRTEDSVRRGKSR) is disordered. Residues 1124-1136 (PRTEDSVRRGKSR) show a composition bias toward basic and acidic residues.

It belongs to the inositol polyphosphate 5-phosphatase family. As to quaternary structure, interacts with KIN10, but not with PHOT1. Mg(2+) serves as cofactor. Expressed in young seedlings and flowers. Highly expressed in anther and pollen grains, but not in pistils. Not detected in maturated roots, stems and rosette leaves.

It is found in the nucleus. The enzyme catalyses 1D-myo-inositol 1,4,5-trisphosphate + H2O = 1D-myo-inositol 1,4-bisphosphate + phosphate. Functionally, converts inositol 1,4,5-trisphosphate (Ins(1,4,5)P3) to inositol 1,4-bisphosphate. Modulates cotyledon vein development through regulating auxin homeostasis. Involved in blue light responses. Decreases the amount of KIN10 degraded by the proteasome under low nutrient conditions. Participates with IP5P12 in the control of Ins(1,4,5)P3/Ca(2+) levels that is crucial for maintaining pollen dormancy and regulating early germination of pollen. May modulate auxin transport by regulating vesicle trafficking and thereby plays a role in root gravitropism. The sequence is that of Type I inositol polyphosphate 5-phosphatase 13 from Arabidopsis thaliana (Mouse-ear cress).